A 503-amino-acid polypeptide reads, in one-letter code: Aspartyl/glutamyl-tRNA(Asn/Gln) amidotransferase subunit B (503 aa).

The protein belongs to the GatB/GatE family. GatB subfamily. As to quaternary structure, heterotrimer of A, B and C subunits.

It catalyses the reaction L-glutamyl-tRNA(Gln) + L-glutamine + ATP + H2O = L-glutaminyl-tRNA(Gln) + L-glutamate + ADP + phosphate + H(+). The catalysed reaction is L-aspartyl-tRNA(Asn) + L-glutamine + ATP + H2O = L-asparaginyl-tRNA(Asn) + L-glutamate + ADP + phosphate + 2 H(+). Functionally, allows the formation of correctly charged Asn-tRNA(Asn) or Gln-tRNA(Gln) through the transamidation of misacylated Asp-tRNA(Asn) or Glu-tRNA(Gln) in organisms which lack either or both of asparaginyl-tRNA or glutaminyl-tRNA synthetases. The reaction takes place in the presence of glutamine and ATP through an activated phospho-Asp-tRNA(Asn) or phospho-Glu-tRNA(Gln). This Mycolicibacterium smegmatis (strain ATCC 700084 / mc(2)155) (Mycobacterium smegmatis) protein is Aspartyl/glutamyl-tRNA(Asn/Gln) amidotransferase subunit B.